Here is a 403-residue protein sequence, read N- to C-terminus: MAHTSESVNPRDVCIVGVARTPMGGFLGSLSSLPATKLGSLAIAAALKRANVDPALVQEVVFGNVLSANLGQAPARQAALGAGIPNSVICTTVNKVCASGMKAVMIAAQSIQLGINDVVVAGGMESMSNTPKYLAEARKGSRFGHDSLVDGMLKDGLWDVYNDCGMGSCAELCAEKFQITREQQDDYAVQSFERGIAAQEAGAFTWEIVPVEVSGGRGRPSTIVDKDEGLGKFDAAKLRKLRPSFKENGGTVTAGNASSISDGAAALVLVSGEKALQLGLLVLAKIKGYGDAAQEPEFFTTAPALAIPKAIAHAGLESSQVDYYEINEAFAVVALANQKLLGIAPEKVNVNGGAVSLGHPLGCSGARILITLLGILKKRNGKYGVGGVCNGGGGASALVLELL.

Residue C97 is the Acyl-thioester intermediate of the active site. K237 is a binding site for CoA. A K(+)-binding site is contributed by A254. A CoA-binding site is contributed by S258. V355 serves as a coordination point for K(+). Catalysis depends on proton acceptor residues H359 and C389.

It belongs to the thiolase-like superfamily. Thiolase family. In terms of tissue distribution, expressed in root tips, emerging leaves, young leaves, stems, and anthers at the microspore stage.

It localises to the cytoplasm. The protein localises to the peroxisome. It carries out the reaction 2 acetyl-CoA = acetoacetyl-CoA + CoA. Its pathway is metabolic intermediate biosynthesis; (R)-mevalonate biosynthesis; (R)-mevalonate from acetyl-CoA: step 1/3. Catalyzes the condensation of two molecules of acetyl-CoA to produce acetoacetyl-CoA. Generates the bulk of the acetoacetyl-CoA precursor required for the cytosol-localized, mevalonate-derived isoprenoid biosynthesis. The generated isoprenoids are required for normal growth and development. Essential protein during embryogenesis. The sequence is that of Acetyl-CoA acetyltransferase 2 from Arabidopsis thaliana (Mouse-ear cress).